The chain runs to 464 residues: MSVEKTNQSWGGRFSEPVDAFVARFTASVDFDKRLYRHDIMGSIAHATMLAKVGVLSDAERDAIVDGLQQIQAEIEAGSFDWRVDLEDVHMNIEARLTDRIGVTGKKLHTGRSRNDQVATDIRLWLRDEIDTILAEITRLQEGLLGLAEAEADTIMPGFTHLQTAQPVTFGHHLLAWFEMLGRDYERLVDCRKRVNRMPLGSAALAGTTYPIQREITCQLLGFDAVGGNSLDGVSDRDFAIEFCAAASLAMMHLSRFSEELVLWTSAQFQFIDLPDRFCTGSSIMPQKKNPDVPELVRGKSGRVFGALTGLLTLMKGQPLAYNKDNQEDKEPLFDAADTLRDSLRAFADMVPAIRPRREIMREAARRGFSTATDLADYLVRKGLPFRDCHEIVGHAVKYGVDSGKDLAEMSLDELRRFSEQIDADVFDVLTLEGSVNARDHIGGTAPNQVRAAVARGRKLLAQR.

Belongs to the lyase 1 family. Argininosuccinate lyase subfamily.

It is found in the cytoplasm. The catalysed reaction is 2-(N(omega)-L-arginino)succinate = fumarate + L-arginine. Its pathway is amino-acid biosynthesis; L-arginine biosynthesis; L-arginine from L-ornithine and carbamoyl phosphate: step 3/3. This chain is Argininosuccinate lyase, found in Pseudomonas aeruginosa (strain ATCC 15692 / DSM 22644 / CIP 104116 / JCM 14847 / LMG 12228 / 1C / PRS 101 / PAO1).